The primary structure comprises 279 residues: Thioredoxin domain-containing protein plp1 (279 aa).

The segment covering 56–70 has biased composition (basic and acidic residues); the sequence is RKEDTQDYNEPELHN. The interval 56–75 is disordered; that stretch reads RKEDTQDYNEPELHNSNDPT. The Thioredoxin domain occupies 137–248; it reads FLTVENEREV…LEFRLLKSSA (112 aa). Residues 254-267 show a composition bias toward basic and acidic residues; it reads EESSSNKSIYHDEL. The tract at residues 254–279 is disordered; it reads EESSSNKSIYHDELQNNQSDDSDFFE. 2 positions are modified to phosphoserine: serine 272 and serine 275.

This sequence belongs to the phosducin family.

The protein resides in the cytoplasm. It is found in the nucleus. Functionally, inhibits early G-protein signaling events following pheromone stimulation. May help create heterodimerizable beta-tubulin by facilitating the efficient transfer of nascent beta-tubulin polypeptides to the folding apparatus. The protein is Thioredoxin domain-containing protein plp1 (plp1) of Schizosaccharomyces pombe (strain 972 / ATCC 24843) (Fission yeast).